The primary structure comprises 278 residues: Alpha-tocopherol transfer protein (278 aa).

The region spanning 88 to 253 (RPRSILGLLK…EYGGKEFSME (166 aa)) is the CRAL-TRIO domain. D185 contacts a 1,2-diacyl-sn-glycero-3-phospho-(1D-myo-inositol-3,4-bisphosphate). F187 is a (+)-alpha-tocopherol binding site. 190 to 192 (KVR) is a binding site for a 1,2-diacyl-sn-glycero-3-phospho-(1D-myo-inositol-3,4-bisphosphate). Position 208–211 (208–211 (SMIK)) interacts with a 1,2-diacyl-sn-glycero-3-phospho-(1D-myo-inositol-4,5-bisphosphate). A 1,2-diacyl-sn-glycero-3-phospho-(1D-myo-inositol-3,4-bisphosphate) is bound by residues K217 and R221.

Monomer and homotetramer. Phosphatidylinositol 4,5-bisphosphate binding induces the formation of homotetramers. Phosphatidylinositol 3,4-bisphosphate is less efficient in inducing tetramerization.

It localises to the cytoplasm. Binds (+)-alpha-tocopherol, enhances its transfer between separate membranes, and stimulates its release from liver cells. Binds both phosphatidylinositol 3,4-bisphosphate and phosphatidylinositol 4,5-bisphosphate; the resulting conformation change is important for the release of the bound alpha-tocopherol. The polypeptide is Alpha-tocopherol transfer protein (Ttpa) (Mus musculus (Mouse)).